The following is a 184-amino-acid chain: Peptidyl-tRNA hydrolase (184 aa).

Tyr14 serves as a coordination point for tRNA. The active-site Proton acceptor is the His19. Residues Phe60 and Asn62 each coordinate tRNA.

This sequence belongs to the PTH family. As to quaternary structure, monomer.

The protein resides in the cytoplasm. The enzyme catalyses an N-acyl-L-alpha-aminoacyl-tRNA + H2O = an N-acyl-L-amino acid + a tRNA + H(+). Hydrolyzes ribosome-free peptidyl-tRNAs (with 1 or more amino acids incorporated), which drop off the ribosome during protein synthesis, or as a result of ribosome stalling. Functionally, catalyzes the release of premature peptidyl moieties from peptidyl-tRNA molecules trapped in stalled 50S ribosomal subunits, and thus maintains levels of free tRNAs and 50S ribosomes. This Mesomycoplasma hyopneumoniae (strain 232) (Mycoplasma hyopneumoniae) protein is Peptidyl-tRNA hydrolase.